Reading from the N-terminus, the 206-residue chain is LOB domain-containing protein 2 (206 aa).

A disordered region spans residues Met1–Ser20. The region spanning Gln23 to Ile123 is the LOB domain.

Belongs to the LOB domain-containing protein family.

This Arabidopsis thaliana (Mouse-ear cress) protein is LOB domain-containing protein 2 (LBD2).